Reading from the N-terminus, the 642-residue chain is 1,4-alpha-glucan branching enzyme GlgB (642 aa).

Aspartate 304 functions as the Nucleophile in the catalytic mechanism. The active-site Proton donor is the glutamate 355.

It belongs to the glycosyl hydrolase 13 family. GlgB subfamily. As to quaternary structure, monomer.

It catalyses the reaction Transfers a segment of a (1-&gt;4)-alpha-D-glucan chain to a primary hydroxy group in a similar glucan chain.. The protein operates within glycan biosynthesis; glycogen biosynthesis. In terms of biological role, catalyzes the formation of the alpha-1,6-glucosidic linkages in glycogen by scission of a 1,4-alpha-linked oligosaccharide from growing alpha-1,4-glucan chains and the subsequent attachment of the oligosaccharide to the alpha-1,6 position. The sequence is that of 1,4-alpha-glucan branching enzyme GlgB from Streptococcus pneumoniae serotype 4 (strain ATCC BAA-334 / TIGR4).